Here is a 121-residue protein sequence, read N- to C-terminus: Basic phospholipase A2 CoaTx-II (121 aa).

7 disulfides stabilise this stretch: C26–C115, C28–C44, C43–C95, C49–C121, C50–C88, C57–C81, and C75–C86. The interval 105-117 (KKYRIYPKFLCKK) is important for membrane-damaging activities in eukaryotes and bacteria; heparin-binding.

This sequence belongs to the phospholipase A2 family. Group II subfamily. K49 sub-subfamily. Homodimer; non-covalently-linked. Expressed by the venom gland.

It is found in the secreted. Functionally, snake venom phospholipase A2 (PLA2) that lacks enzymatic inactivity. It shows antibacterial activity against both Gram-negative and Gram-positive bacteria, including methicillin-resistant strains. In vivo, it causes local muscular damage, but no systemic damage (intravenous administration does not elevate plasma creatine kinase). Also causes an inflammatory activity that is demonstrated by mice paw edema induction and pro-inflammatory cytokine IL-6 elevation. A model of myotoxic mechanism has been proposed: an apo Lys49-PLA2 is activated by the entrance of a hydrophobic molecule (e.g. fatty acid) at the hydrophobic channel of the protein leading to a reorientation of a monomer. This reorientation causes a transition between 'inactive' to 'active' states, causing alignment of C-terminal and membrane-docking sites (MDoS) side-by-side and putting the membrane-disruption sites (MDiS) in the same plane, exposed to solvent and in a symmetric position for both monomers. The MDoS region stabilizes the toxin on membrane by the interaction of charged residues with phospholipid head groups. Subsequently, the MDiS region destabilizes the membrane with penetration of hydrophobic residues. This insertion causes a disorganization of the membrane, allowing an uncontrolled influx of ions (i.e. calcium and sodium), and eventually triggering irreversible intracellular alterations and cell death. In Crotalus lutosus abyssus (Grand Canyon rattlesnake), this protein is Basic phospholipase A2 CoaTx-II.